A 253-amino-acid polypeptide reads, in one-letter code: MRILLSNDDGIHAPGIQTLAKYLREFADVQVVAPDRNRSGASNSLTLESSLRTFAFENGDIAVQMGTPTDCVFLGVNTLMRPGPDVVVSGINAGPNLGDDVIYSGTVAAAMEGRHLGFPALAVSLNGHQHYDTAAAVTCSILRALSREPLRTGRILNINVPDLPLDEIKGIRVTRCGSRHPADQVIPQQDPRGNTLYWIGPPGDKCDAGPDTDFAAVDEGYVSVTPLHVDLTAYNAQDVVSGWLERAGVNTQW.

A divalent metal cation contacts are provided by aspartate 8, aspartate 9, serine 39, and asparagine 92.

This sequence belongs to the SurE nucleotidase family. Requires a divalent metal cation as cofactor.

The protein resides in the cytoplasm. It catalyses the reaction a ribonucleoside 5'-phosphate + H2O = a ribonucleoside + phosphate. The catalysed reaction is a ribonucleoside 3'-phosphate + H2O = a ribonucleoside + phosphate. The enzyme catalyses [phosphate](n) + H2O = [phosphate](n-1) + phosphate + H(+). Functionally, nucleotidase with a broad substrate specificity as it can dephosphorylate various ribo- and deoxyribonucleoside 5'-monophosphates and ribonucleoside 3'-monophosphates with highest affinity to 3'-AMP. Also hydrolyzes polyphosphate (exopolyphosphatase activity) with the preference for short-chain-length substrates (P20-25). Might be involved in the regulation of dNTP and NTP pools, and in the turnover of 3'-mononucleotides produced by numerous intracellular RNases (T1, T2, and F) during the degradation of various RNAs. The chain is 5'/3'-nucleotidase SurE from Enterobacter sp. (strain 638).